The following is a 396-amino-acid chain: Elongation factor Tu (396 aa).

One can recognise a tr-type G domain in the interval 10-205 (KPHVNIGTIG…AVDESIPDPV (196 aa)). The G1 stretch occupies residues 19 to 26 (GHVDHGKT). 19 to 26 (GHVDHGKT) is a GTP binding site. Threonine 26 serves as a coordination point for Mg(2+). Residues 62-66 (GITIN) form a G2 region. Positions 83–86 (DAPG) are G3. Residues 83–87 (DAPGH) and 138–141 (NKAD) each bind GTP. The tract at residues 138–141 (NKAD) is G4. Residues 175 to 177 (SAL) form a G5 region.

Belongs to the TRAFAC class translation factor GTPase superfamily. Classic translation factor GTPase family. EF-Tu/EF-1A subfamily. Monomer.

Its subcellular location is the cytoplasm. The enzyme catalyses GTP + H2O = GDP + phosphate + H(+). Functionally, GTP hydrolase that promotes the GTP-dependent binding of aminoacyl-tRNA to the A-site of ribosomes during protein biosynthesis. The protein is Elongation factor Tu of Rhodococcus jostii (strain RHA1).